The sequence spans 361 residues: Prostaglandin E2 receptor EP2 subtype (361 aa).

A compositionally biased stretch (polar residues) spans 1 to 10 (MGSISNNSGS). The tract at residues 1–21 (MGSISNNSGSEDCESREWLPS) is disordered. Topologically, residues 1–23 (MGSISNNSGSEDCESREWLPSGE) are extracellular. Residue Asn-6 is glycosylated (N-linked (GlcNAc...) asparagine). The helical transmembrane segment at 24–47 (SPAISSAMFSAGVLGNLIALALLA) threads the bilayer. Over 48–65 (RRWRGDAGRRAGRGNSIS) the chain is Cytoplasmic. Residues 66-91 (LFHVLVTELVFTDLLGTCLISPVVLA) form a helical membrane-spanning segment. The Extracellular portion of the chain corresponds to 92-111 (SYARNQTLMALEPERRACTY). Asn-96 is a glycosylation site (N-linked (GlcNAc...) asparagine). Residues Cys-109 and Cys-187 are joined by a disulfide bond. A helical transmembrane segment spans residues 112–132 (FAFAMTFFSLATMLMLFAMAL). The Cytoplasmic segment spans residues 133 to 151 (ERYLSIGRPYFYQRHVTRR). A helical transmembrane segment spans residues 152–176 (GGLAVLPTIYTVSLLFCSLPLLGYG). Residues 177–198 (QYVQYCPGTWCFIRHGRTAYLQ) lie on the Extracellular side of the membrane. Residues 199 to 223 (LYATLLLLLIVAVLACNFSVILNLI) form a helical membrane-spanning segment. Topologically, residues 224–262 (RMHRRSGRSRCGPSLGSCRDGSGTRRRGERVSVAEETDH) are cytoplasmic. The interval 230–253 (GRSRCGPSLGSCRDGSGTRRRGER) is disordered. The helical transmembrane segment at 263 to 286 (LILLAIMTITFAICSLPFTIFAYM) threads the bilayer. N-linked (GlcNAc...) asparagine glycosylation occurs at Asn-287. Over 287 to 299 (NETSSRREKWDLQ) the chain is Extracellular. The helical transmembrane segment at 300–323 (ALRFLSINSIIDPWVFAIFRPPVL) threads the bilayer. At 324 to 361 (RLMRSVLCCRVSLRAQDATQTSCSIQSNASRLTFVDTS) the chain is on the cytoplasmic side.

The protein belongs to the G-protein coupled receptor 1 family.

The protein resides in the cell membrane. Functionally, receptor for prostaglandin E2 (PGE2). The activity of this receptor is mediated by G(s) proteins that stimulate adenylate cyclase. The subsequent raise in intracellular cAMP is responsible for the relaxing effect of this receptor on smooth muscle. This chain is Prostaglandin E2 receptor EP2 subtype (PTGER2), found in Canis lupus familiaris (Dog).